Reading from the N-terminus, the 151-residue chain is Ribosome maturation factor RimP (151 aa).

The protein belongs to the RimP family.

It localises to the cytoplasm. Its function is as follows. Required for maturation of 30S ribosomal subunits. In Shewanella amazonensis (strain ATCC BAA-1098 / SB2B), this protein is Ribosome maturation factor RimP.